We begin with the raw amino-acid sequence, 560 residues long: Bifunctional NAD(P)H-hydrate repair enzyme (560 aa).

Residues 1-241 (MLSRLSERCT…WMTAPERMRV (241 aa)) form an NAD(P)H-hydrate epimerase region. Residues 29 to 235 (LRDAEPAAAA…SLGLEDWMTA (207 aa)) form the YjeF N-terminal domain. The segment at 77-81 (NNGGD) is NADPHX 1; for epimerase activity. Residues asparagine 78 and aspartate 145 each contribute to the K(+) site. The interval 149–155 (GTGICGP) is NADPHX 1; for epimerase activity. Residues tyrosine 160 and aspartate 178 each coordinate (6S)-NADPHX. Serine 181 lines the K(+) pocket. The YjeF C-terminal domain maps to 249–547 (LDDVYEYFGI…HRVPLIVNAS (299 aa)). Residues 249 to 560 (LDDVYEYFGI…PASRQRPSGQ (312 aa)) are ADP-dependent (S)-NAD(P)H-hydrate dehydratase. A (6S)-NADPHX-binding site is contributed by glycine 351. The segment at 417–423 (HPGEAAR) is NADPHX 2; for dehydratase activity. ADP-binding positions include 454-458 (KGPGT) and 475-484 (NAGMASGGMG). Aspartate 485 contributes to the (6S)-NADPHX binding site.

It in the N-terminal section; belongs to the NnrE/AIBP family. The protein in the C-terminal section; belongs to the NnrD/CARKD family. K(+) serves as cofactor.

It catalyses the reaction (6S)-NADHX + ADP = AMP + phosphate + NADH + H(+). The enzyme catalyses (6S)-NADPHX + ADP = AMP + phosphate + NADPH + H(+). It carries out the reaction (6R)-NADHX = (6S)-NADHX. The catalysed reaction is (6R)-NADPHX = (6S)-NADPHX. Functionally, bifunctional enzyme that catalyzes the epimerization of the S- and R-forms of NAD(P)HX and the dehydration of the S-form of NAD(P)HX at the expense of ADP, which is converted to AMP. This allows the repair of both epimers of NAD(P)HX, a damaged form of NAD(P)H that is a result of enzymatic or heat-dependent hydration. This Leishmania major protein is Bifunctional NAD(P)H-hydrate repair enzyme.